The chain runs to 187 residues: Putative manganese efflux pump MntP (187 aa).

Transmembrane regions (helical) follow at residues F3–C23, H35–Y55, F56–L76, L107–L127, V129–A149, and L166–F186.

The protein belongs to the MntP (TC 9.B.29) family.

It localises to the cell inner membrane. In terms of biological role, probably functions as a manganese efflux pump. This Campylobacter jejuni subsp. doylei (strain ATCC BAA-1458 / RM4099 / 269.97) protein is Putative manganese efflux pump MntP.